We begin with the raw amino-acid sequence, 462 residues long: Bindin (462 aa).

Positions 1 to 19 are cleaved as a signal peptide; the sequence is MARQLSVILVALTLTTALA. The propeptide occupies 20–244; it reads ENFPTRTSAP…DSGRSARKKR (225 aa). Disordered stretches follow at residues 155–194 and 221–278; these read DDRR…APKD and RTRR…QGMG. Residues 372–380 form a fucose-binding domain region; it reads LRHLRHHSN.

It belongs to the bindin family.

The protein resides in the cytoplasmic vesicle. It is found in the secretory vesicle. It localises to the acrosome lumen. In terms of biological role, species-specific sea urchin sperm protein required for adhesion of sperm to the egg surface during fertilization. Bindin coats the acrosomal process after it is externalized by the acrosome reaction. It binds to sulfated, fucose-containing polysaccharides on the vitelline layer receptor proteoglycans which cover the egg plasma membrane. This chain is Bindin, found in Lytechinus variegatus (Green sea urchin).